A 246-amino-acid chain; its full sequence is UDP-N-acetyl-D-mannosaminuronic acid transferase (246 aa).

The protein belongs to the glycosyltransferase 26 family.

It carries out the reaction UDP-N-acetyl-alpha-D-mannosaminouronate + N-acetyl-alpha-D-glucosaminyl-di-trans,octa-cis-undecaprenyl diphosphate = beta-D-ManNAcA-(1-&gt;4)-alpha-D-GlcNAc-di-trans,octa-cis-undecaprenyl diphosphate + UDP + H(+). Its pathway is bacterial outer membrane biogenesis; enterobacterial common antigen biosynthesis. Catalyzes the synthesis of Und-PP-GlcNAc-ManNAcA (Lipid II), the second lipid-linked intermediate involved in enterobacterial common antigen (ECA) synthesis. This Escherichia coli (strain K12) protein is UDP-N-acetyl-D-mannosaminuronic acid transferase.